We begin with the raw amino-acid sequence, 980 residues long: Probable outer membrane protein PmpH (980 aa).

The first 24 residues, 1-24 (MPFSLRSTSFCFLACLCSYSYGLA), serve as a signal peptide directing secretion. Residues 661 to 980 (GELVPNSLWV…FVSLGLNRIF (320 aa)) enclose the Autotransporter domain.

It belongs to the PMP outer membrane protein family.

The protein localises to the secreted. It is found in the cell wall. It localises to the cell outer membrane. This chain is Probable outer membrane protein PmpH (pmpH), found in Chlamydia muridarum (strain MoPn / Nigg).